We begin with the raw amino-acid sequence, 321 residues long: Probable pectate lyase A (321 aa).

The first 20 residues, Met1 to Ala20, serve as a signal peptide directing secretion. Residue Asn93 is glycosylated (N-linked (GlcNAc...) asparagine). Positions 134, 163, and 167 each coordinate Ca(2+). Residue Arg220 is part of the active site.

Belongs to the polysaccharide lyase 1 family. It depends on Ca(2+) as a cofactor.

The protein localises to the secreted. It catalyses the reaction Eliminative cleavage of (1-&gt;4)-alpha-D-galacturonan to give oligosaccharides with 4-deoxy-alpha-D-galact-4-enuronosyl groups at their non-reducing ends.. Its function is as follows. Pectinolytic enzyme consist of four classes of enzymes: pectin lyase, polygalacturonase, pectin methylesterase and rhamnogalacturonase. Among pectinolytic enzymes, pectin lyase is the most important in depolymerization of pectin, since it cleaves internal glycosidic bonds of highly methylated pectins. Favors pectate, the anion, over pectin, the methyl ester. This Aspergillus flavus (strain ATCC 200026 / FGSC A1120 / IAM 13836 / NRRL 3357 / JCM 12722 / SRRC 167) protein is Probable pectate lyase A (plyA).